We begin with the raw amino-acid sequence, 364 residues long: Phenylalanine dehydrogenase (364 aa).

Residue R62 participates in NAD(+) binding. K86 provides a ligand contact to L-phenylalanine. Residue K98 is the Proton donor/acceptor of the active site. Residues D133, S164, T168, 255–256 (AM), and 276–278 (AAN) each bind NAD(+). N278 contacts L-phenylalanine.

Belongs to the Glu/Leu/Phe/Val dehydrogenases family.

It carries out the reaction L-phenylalanine + NAD(+) + H2O = 3-phenylpyruvate + NH4(+) + NADH + H(+). Its pathway is amino-acid biosynthesis; L-phenylalanine biosynthesis; L-phenylalanine from phenylpyruvate (PDH route): step 1/1. In terms of biological role, catalyzes the reversible NAD(+)-dependent oxidative deamination of L-phenylalanine to phenylpyruvate. The protein is Phenylalanine dehydrogenase of Rhodococcus jostii (strain RHA1).